The primary structure comprises 35 residues: 5'-methylthioadenosine/S-adenosylhomocysteine nucleosidase (35 aa).

Glutamate 12 (proton acceptor) is an active-site residue.

This sequence belongs to the PNP/UDP phosphorylase family. MtnN subfamily. Homodimer.

It catalyses the reaction S-adenosyl-L-homocysteine + H2O = S-(5-deoxy-D-ribos-5-yl)-L-homocysteine + adenine. The enzyme catalyses S-methyl-5'-thioadenosine + H2O = 5-(methylsulfanyl)-D-ribose + adenine. It carries out the reaction 5'-deoxyadenosine + H2O = 5-deoxy-D-ribose + adenine. The protein operates within amino-acid biosynthesis; L-methionine biosynthesis via salvage pathway; S-methyl-5-thio-alpha-D-ribose 1-phosphate from S-methyl-5'-thioadenosine (hydrolase route): step 1/2. Functionally, catalyzes the irreversible cleavage of the glycosidic bond in both 5'-methylthioadenosine (MTA) and S-adenosylhomocysteine (SAH/AdoHcy) to adenine and the corresponding thioribose, 5'-methylthioribose and S-ribosylhomocysteine, respectively. Also cleaves 5'-deoxyadenosine, a toxic by-product of radical S-adenosylmethionine (SAM) enzymes, into 5-deoxyribose and adenine. Thus, is required for in vivo function of the radical SAM enzymes biotin synthase and lipoic acid synthase, that are inhibited by 5'-deoxyadenosine accumulation. This Klebsiella pneumoniae protein is 5'-methylthioadenosine/S-adenosylhomocysteine nucleosidase (mtnN).